Reading from the N-terminus, the 122-residue chain is Cupin 2 conserved barrel domain-containing protein (122 aa).

Residues 55 to 119 (PGGVTTAEDH…DSPVEIVSIW (65 aa)) form a cupin 2 conserved barrel region. Zn(2+)-binding residues include Asp63, His65, Glu69, and His103.

Zn(2+) serves as cofactor.

The catalysed reaction is N(6)-hydroxy-L-lysine + L-glutamate + ATP = 1-L-glutamo-2-N(6-)L-lysinohydrazine + AMP + diphosphate + 2 H(+). With respect to regulation, inhibited by 1,10-phenanthroline (OP). In terms of biological role, catalyzes hydrazine (N-N) bond formation from an unstable ester intermediate, the product of the ATP-dependent condensation of L-N(6)-OH-lysine and L-glutamine substrates by a methionyl-tRNA synthase-like protein. The chain is Cupin 2 conserved barrel domain-containing protein from Rhodococcus jostii (strain RHA1).